We begin with the raw amino-acid sequence, 394 residues long: Ribulose bisphosphate carboxylase large chain (394 aa).

Residue Lys5 is modified to N6,N6,N6-trimethyllysine. Substrate is bound by residues Asn114 and Thr164. Lys166 acts as the Proton acceptor in catalysis. Position 168 (Lys168) interacts with substrate. Residues Lys192, Asp194, and Glu195 each contribute to the Mg(2+) site. At Lys192 the chain carries N6-carboxylysine. His285 (proton acceptor) is an active-site residue. Positions 286, 318, and 370 each coordinate substrate.

Belongs to the RuBisCO large chain family. Type I subfamily. Heterohexadecamer of 8 large chains and 8 small chains. Requires Mg(2+) as cofactor.

The protein resides in the plastid. Its subcellular location is the chloroplast. It carries out the reaction 2 (2R)-3-phosphoglycerate + 2 H(+) = D-ribulose 1,5-bisphosphate + CO2 + H2O. The enzyme catalyses D-ribulose 1,5-bisphosphate + O2 = 2-phosphoglycolate + (2R)-3-phosphoglycerate + 2 H(+). RuBisCO catalyzes two reactions: the carboxylation of D-ribulose 1,5-bisphosphate, the primary event in carbon dioxide fixation, as well as the oxidative fragmentation of the pentose substrate in the photorespiration process. Both reactions occur simultaneously and in competition at the same active site. This chain is Ribulose bisphosphate carboxylase large chain (rbcL), found in Euryale ferox (Gorgon plant).